We begin with the raw amino-acid sequence, 590 residues long: Aspartate--tRNA(Asp/Asn) ligase (590 aa).

L-aspartate is bound at residue Glu-169. The segment at 193-196 is aspartate; that stretch reads QLFK. Arg-215 contacts L-aspartate. ATP-binding positions include 215 to 217 and Gln-224; that span reads RDE. His-447 provides a ligand contact to L-aspartate. Glu-479 is an ATP binding site. Arg-486 contributes to the L-aspartate binding site. ATP is bound at residue 531–534; the sequence is GWDR. A disordered region spans residues 556-590; it reads GGFDPLTAAPAPITPEQRKEAGVDARPQQDLPPQS.

The protein belongs to the class-II aminoacyl-tRNA synthetase family. Type 1 subfamily. As to quaternary structure, homodimer.

The protein resides in the cytoplasm. It carries out the reaction tRNA(Asx) + L-aspartate + ATP = L-aspartyl-tRNA(Asx) + AMP + diphosphate. Functionally, aspartyl-tRNA synthetase with relaxed tRNA specificity since it is able to aspartylate not only its cognate tRNA(Asp) but also tRNA(Asn). Reaction proceeds in two steps: L-aspartate is first activated by ATP to form Asp-AMP and then transferred to the acceptor end of tRNA(Asp/Asn). This Nocardioides sp. (strain ATCC BAA-499 / JS614) protein is Aspartate--tRNA(Asp/Asn) ligase.